The primary structure comprises 500 residues: MINAQEISALLKQQIEGFQPDFDYTETGVVTYIGDGIARAQGLDNAMSGELLVFENGTIGMAQNLETNDVGIIILGQFTDIREGSVVRRTGKIMEVPVGSALIGRVINPLGQPVDGLGEIRTSKTRPIEYPAPGVMQRKSVNEPLQTGLKAIDALVPIGRGQRELIIGDRQTGKTSVAIDAILNQKGQDMICIYVAIGQKESTVRTQVETLRQYGALDYTIVVTASASQPSPLLFLAPYAGVAMAEEFMYEGKHVLIVYDDLSKQAVAYRELSLLLRRPPGREAYPGDVFYLHSRLLERSAKVSDELGGGSITALPFIETQAGDISAYIATNVISITDGQIFLKDDLFNSGIRPAIDAGSSVSRVGGSAQIKAMKKVAGTLRIDLASYRELEAFTQFGSDLDAATQAKLNRGRRTVEVLKQPLHKPLPVEKQVLILYALTNGFLDSVPIDDILAFEEELYAYFDLHYDGLLDVIRTTKDLPDTDELNAAIQAFKDQSVFK.

168–175 (GDRQTGKT) contributes to the ATP binding site.

Belongs to the ATPase alpha/beta chains family. F-type ATPases have 2 components, CF(1) - the catalytic core - and CF(0) - the membrane proton channel. CF(1) has five subunits: alpha(3), beta(3), gamma(1), delta(1), epsilon(1). CF(0) has three main subunits: a(1), b(2) and c(9-12). The alpha and beta chains form an alternating ring which encloses part of the gamma chain. CF(1) is attached to CF(0) by a central stalk formed by the gamma and epsilon chains, while a peripheral stalk is formed by the delta and b chains.

It localises to the cell membrane. It catalyses the reaction ATP + H2O + 4 H(+)(in) = ADP + phosphate + 5 H(+)(out). Produces ATP from ADP in the presence of a proton gradient across the membrane. The alpha chain is a regulatory subunit. The sequence is that of ATP synthase subunit alpha from Streptococcus suis (strain 98HAH33).